The sequence spans 242 residues: Biosynthetic peptidoglycan transglycosylase (242 aa).

Residues 19-39 (ILAALAVFWGGGIALFSVVPV) form a helical membrane-spanning segment.

This sequence belongs to the glycosyltransferase 51 family.

Its subcellular location is the cell inner membrane. The catalysed reaction is [GlcNAc-(1-&gt;4)-Mur2Ac(oyl-L-Ala-gamma-D-Glu-L-Lys-D-Ala-D-Ala)](n)-di-trans,octa-cis-undecaprenyl diphosphate + beta-D-GlcNAc-(1-&gt;4)-Mur2Ac(oyl-L-Ala-gamma-D-Glu-L-Lys-D-Ala-D-Ala)-di-trans,octa-cis-undecaprenyl diphosphate = [GlcNAc-(1-&gt;4)-Mur2Ac(oyl-L-Ala-gamma-D-Glu-L-Lys-D-Ala-D-Ala)](n+1)-di-trans,octa-cis-undecaprenyl diphosphate + di-trans,octa-cis-undecaprenyl diphosphate + H(+). The protein operates within cell wall biogenesis; peptidoglycan biosynthesis. Functionally, peptidoglycan polymerase that catalyzes glycan chain elongation from lipid-linked precursors. In Salmonella heidelberg (strain SL476), this protein is Biosynthetic peptidoglycan transglycosylase.